The sequence spans 427 residues: Phosphatase PSR1 (427 aa).

2 S-palmitoyl cysteine lipidation sites follow: cysteine 9 and cysteine 10. Residues 14-34 are compositionally biased toward polar residues; sequence TTQSNSNSAYRQQQSSSLNKN. The disordered stretch occupies residues 14 to 223; the sequence is TTQSNSNSAY…SNDADDEDDE (210 aa). The span at 35-48 shows a compositional bias: basic residues; sequence RSVKHSNTKSRTRG. Residues 49–80 show a composition bias toward polar residues; that stretch reads VHQTNSPPSKTNSAATFSSTERSTGKSGISTN. Residues 104-118 are compositionally biased toward basic and acidic residues; it reads KVEKRISKDDLYEEK. Position 110 is a phosphoserine (serine 110). Residues 119-130 show a composition bias toward acidic residues; that stretch reads YEVDEDEEIDDE. A compositionally biased stretch (basic and acidic residues) spans 131 to 151; that stretch reads DNRRSRGIVQEKGDAVKDTSR. Residue lysine 154 forms a Glycyl lysine isopeptide (Lys-Gly) (interchain with G-Cter in ubiquitin) linkage. A compositionally biased stretch (low complexity) spans 155–183; that stretch reads QQQQQQQQSQPQPQPQSQSQSQSQSQSQQ. The segment covering 184 to 214 has biased composition (polar residues); the sequence is RGPTVQVSSDHLIQDMNLSRVSSSSQASETS. Residues 253-411 enclose the FCP1 homology domain; sequence STKGKKCLIL…LDIIPLLEDL (159 aa).

As to quaternary structure, interacts with WHI2.

The protein resides in the cell membrane. In terms of biological role, has phosphatase activity in vitro. Involved in the response to sodium and lithium ion stress (but not to potassium or sorbitol stress) by inducing transcription of the sodium pump ENA1/PMR2. Acts through a calcineurin-independent pathway and is functionally redundant with PSR2. Also involved in the general stress response; acts together with WHI2 to activate stress response element (STRE)-mediated gene expression, possibly through dephosphorylation of MSN2. The sequence is that of Phosphatase PSR1 (PSR1) from Saccharomyces cerevisiae (strain ATCC 204508 / S288c) (Baker's yeast).